Here is a 186-residue protein sequence, read N- to C-terminus: UPF0397 protein LBUL_1584 (186 aa).

A run of 5 helical transmembrane segments spans residues 13–33, 46–66, 79–99, 114–134, and 150–170; these read IAAL…ASIP, AFLA…VGFI, TWWN…LYAL, VIFN…LGSV, and QAGL…TILL.

Belongs to the UPF0397 family.

It localises to the cell membrane. This chain is UPF0397 protein LBUL_1584, found in Lactobacillus delbrueckii subsp. bulgaricus (strain ATCC BAA-365 / Lb-18).